Here is a 3020-residue protein sequence, read N- to C-terminus: Protein furry homolog (3020 aa).

Phosphotyrosine is present on tyrosine 213. 3 disordered regions span residues 1378-1404, 1529-1554, and 1746-1773; these read GSSP…LKGN, ASGT…ESKI, and SSPV…GNLP. Residues serine 1382 and serine 1383 each carry the phosphoserine modification. Over residues 1752–1772 the composition is skewed to low complexity; sequence SGLNSSSTSSSISLGGSSGNL. Residues serine 1936 and serine 1940 each carry the phosphoserine modification. The span at 1937–1956 shows a compositional bias: low complexity; the sequence is RSSSPDLSSSSKLTASRKST. Disordered regions lie at residues 1937 to 2042 and 2355 to 2384; these read RSSS…PSHV and LQNS…SNSN. Positions 1966 to 1976 are enriched in gly residues; it reads PGSGGGGGGSG. Polar residues predominate over residues 2016–2042; it reads ACTQQGLSSKTRSNSSLKESLTDPSHV. Positions 2369–2384 are enriched in low complexity; it reads AVTRSASSTSSGSNSN. Residues serine 2427 and serine 2428 each carry the phosphoserine modification. Residues 2439 to 2458 are disordered; the sequence is TSLVSSEDGPREQENMDDTN. Phosphoserine is present on serine 2495. Residues 2508 to 2535 are disordered; the sequence is EERQLSRSTPSLNKMSHEDSDESSEEDL. The residue at position 2516 (threonine 2516) is a Phosphothreonine; by CDK1. A compositionally biased stretch (acidic residues) spans 2526 to 2535; it reads DSDESSEEDL. Position 2815 is a phosphoserine (serine 2815).

Belongs to the furry protein family. In terms of assembly, when phosphorylated by CDK1, interacts with PLK1; this interaction occurs in mitotic cells, but not in interphase cells, and leads to further FRY phosphorylation by PLK1. Phosphorylated by AURKA, CDK1 and PLK1.

It localises to the cytoplasm. It is found in the cytoskeleton. The protein localises to the microtubule organizing center. Its subcellular location is the centrosome. The protein resides in the spindle pole. Its function is as follows. Plays a crucial role in the structural integrity of mitotic centrosomes and in the maintenance of spindle bipolarity by promoting PLK1 activity at the spindle poles in early mitosis. May function as a scaffold promoting the interaction between AURKA and PLK1, thereby enhancing AURKA-mediated PLK1 phosphorylation. The polypeptide is Protein furry homolog (Fry) (Mus musculus (Mouse)).